The chain runs to 281 residues: MDPYIINKIQYDNDKITTPLRIFDKFIKRDKDDNIKYFEIHSNFINDLLGGKFVKDIEISVSDTHYNKLVDNNYLYGAEITDFNKLQIKGTLENGVITFPQINSDNPLPKISNKQYIYIRVKITGELEDIMNLRLKTTCRVGYIDKEIFDYVMNSEFRYLDNCVLSEGIISNCDDEINFSENSSYEVLLSQAHSMFPFSMFFYFISKTICYTNIECHVIDYDFNIVDDTRDLIYENKHVTLNMQELSNESIKKPIESSYHNKIFYQGIYSQRLVYLRFTTI.

This is an uncharacterized protein from Acanthamoeba polyphaga (Amoeba).